The primary structure comprises 1532 residues: Glycogen debranching enzyme (1532 aa).

S64 is modified (phosphoserine). Catalysis depends on residues D526, H529, and D627.

Belongs to the glycogen debranching enzyme family. As to quaternary structure, monomer. Interacts with NHLRC1/malin. The N-terminus is blocked. In terms of processing, ubiquitinated. As to expression, liver, kidney and lymphoblastoid cells express predominantly isoform 1; whereas muscle and heart express not only isoform 1, but also muscle-specific isoform mRNAs (isoforms 2, 3 and 4). Isoforms 5 and 6 are present in both liver and muscle.

It localises to the cytoplasm. The catalysed reaction is Transfers a segment of a (1-&gt;4)-alpha-D-glucan to a new position in an acceptor, which may be glucose or a (1-&gt;4)-alpha-D-glucan.. It carries out the reaction Hydrolysis of (1-&gt;6)-alpha-D-glucosidic branch linkages in glycogen phosphorylase limit dextrin.. In terms of biological role, multifunctional enzyme acting as 1,4-alpha-D-glucan:1,4-alpha-D-glucan 4-alpha-D-glycosyltransferase and amylo-1,6-glucosidase in glycogen degradation. This Homo sapiens (Human) protein is Glycogen debranching enzyme (AGL).